A 57-amino-acid polypeptide reads, in one-letter code: Large ribosomal subunit protein bL32 (57 aa).

The segment at 1-38 (MAVQQNKPTRSKRGMRRSHDALTAVTSLSVDQTSGEKH) is disordered. Polar residues predominate over residues 24-33 (AVTSLSVDQT).

This sequence belongs to the bacterial ribosomal protein bL32 family.

The protein is Large ribosomal subunit protein bL32 of Enterobacter sp. (strain 638).